The chain runs to 122 residues: Large ribosomal subunit protein uL14 (122 aa).

Belongs to the universal ribosomal protein uL14 family. As to quaternary structure, part of the 50S ribosomal subunit. Forms a cluster with proteins L3 and L19. In the 70S ribosome, L14 and L19 interact and together make contacts with the 16S rRNA in bridges B5 and B8.

Binds to 23S rRNA. Forms part of two intersubunit bridges in the 70S ribosome. This Chlamydia caviae (strain ATCC VR-813 / DSM 19441 / 03DC25 / GPIC) (Chlamydophila caviae) protein is Large ribosomal subunit protein uL14.